Here is a 307-residue protein sequence, read N- to C-terminus: Ubiquinol oxidase subunit 2 (307 aa).

A signal peptide spans 1 to 23; it reads MKNKLLARVARLGGLSSALLLAG. C24 carries the N-palmitoyl cysteine lipid modification. The S-diacylglycerol cysteine moiety is linked to residue C24. 2 consecutive transmembrane segments (helical) span residues 46–66 and 87–107; these read STVA…LFAW and IEVT…VITY.

The protein belongs to the cytochrome c oxidase subunit 2 family. As to quaternary structure, heterotetramer of the subunits 1, 2, 3 and 4.

The protein resides in the cell membrane. This Acetobacter aceti protein is Ubiquinol oxidase subunit 2 (cyaB).